The primary structure comprises 94 residues: CRISPR-associated endoribonuclease Cas2 (94 aa).

D10 is a binding site for Mg(2+).

It belongs to the CRISPR-associated endoribonuclease Cas2 protein family. In terms of assembly, homodimer, forms a heterotetramer with a Cas1 homodimer. Mg(2+) is required as a cofactor.

CRISPR (clustered regularly interspaced short palindromic repeat), is an adaptive immune system that provides protection against mobile genetic elements (viruses, transposable elements and conjugative plasmids). CRISPR clusters contain sequences complementary to antecedent mobile elements and target invading nucleic acids. CRISPR clusters are transcribed and processed into CRISPR RNA (crRNA). Functions as a ssRNA-specific endoribonuclease. Involved in the integration of spacer DNA into the CRISPR cassette. The chain is CRISPR-associated endoribonuclease Cas2 from Leptospira interrogans serogroup Icterohaemorrhagiae serovar Lai (strain 56601).